The primary structure comprises 495 residues: Solute carrier family 2, facilitated glucose transporter member 3 (495 aa).

Over 1-10 the chain is Cytoplasmic; sequence MGTQKVTVSL. The chain crosses the membrane as a helical span at residues 11 to 32; sequence IFALSIATIGSFQFGYNTGVIN. Over 33–64 the chain is Extracellular; it reads APETIIKDFLNYTLEEKSENLPTEVLLTSLWS. Asn-43 carries N-linked (GlcNAc...) asparagine glycosylation. Residues 65–85 traverse the membrane as a helical segment; that stretch reads LSVAIFSVGGMIGSFSVGLFV. Residues 86-90 are Cytoplasmic-facing; that stretch reads NRFGR. A helical membrane pass occupies residues 91–111; the sequence is RNSMLMVNLLAVAGGCLMGFC. Residues 112 to 118 are Extracellular-facing; the sequence is KIAQSVE. A helical transmembrane segment spans residues 119 to 142; the sequence is MLILGRLIIGLFCGLCTGFVPMYI. Topologically, residues 143–153 are cytoplasmic; that stretch reads GEISPTALRGA. A helical membrane pass occupies residues 154-174; it reads FGTLNQLGIVIGILVAQIFGL. Gln-159 is a binding site for D-glucose. The Extracellular portion of the chain corresponds to 175-183; it reads KVIMGTEEL. The chain crosses the membrane as a helical span at residues 184-204; it reads WPLLLGFTIIPAVLQSAALPF. Topologically, residues 205-269 are cytoplasmic; it reads CPESPRFLLI…LFRSRSYRQP (65 aa). Thr-232 is modified (phosphothreonine). A helical membrane pass occupies residues 270–290; that stretch reads IIISIMLQLSQQLSGINAVFY. Residues 277–279 form an important for selectivity against fructose region; sequence QLS. Residues 280–281 and Asn-286 each bind D-glucose; that span reads QQ. Over 291–304 the chain is Extracellular; the sequence is YSTGIFKDAGVEEP. A helical membrane pass occupies residues 305 to 325; sequence IYATIGAGVVNTIFTVVSLFL. Asn-315 contacts D-glucose. The Cytoplasmic segment spans residues 326-331; that stretch reads VERAGR. The chain crosses the membrane as a helical span at residues 332–352; it reads RTLHMIGLGGMAVCSILMTIS. Residues 353-363 are Extracellular-facing; the sequence is LLLKDNYNWMS. The chain crosses the membrane as a helical span at residues 364–389; it reads FVCIGAILVFVAFFEIGPGPIPWFIV. D-glucose contacts are provided by Glu-378 and Trp-386. Topologically, residues 390–399 are cytoplasmic; sequence AELFSQGPRP. A helical membrane pass occupies residues 400–420; sequence AAMAVAGCSNWTSNFLVGLLF. At 421 to 429 the chain is on the extracellular side; sequence PSAAFYLGA. A helical transmembrane segment spans residues 430–450; it reads YVFIIFTGFLIVFLVFTFFKV. Over 451-495 the chain is Cytoplasmic; it reads PETRGRTFEEITRAFEGQGQDANRAEKGPIVEMNSMQPVKETATV. Ser-485 is modified (phosphoserine). A Phosphothreonine modification is found at Thr-492.

This sequence belongs to the major facilitator superfamily. Sugar transporter (TC 2.A.1.1) family. Glucose transporter subfamily. In terms of assembly, interacts with SMIM43; the interaction may promote SLC2A3-mediated glucose transport to meet the energy needs of mesendoderm differentiation.

It localises to the cell membrane. The protein localises to the perikaryon. The protein resides in the cell projection. It carries out the reaction D-glucose(out) = D-glucose(in). The enzyme catalyses D-galactose(in) = D-galactose(out). Deoxyglucose transport is inhibited by D-glucose, D-galactose and maltose. Galactose transport is inhibited by D-glucose and maltose. Facilitative glucose transporter. Can also mediate the uptake of various other monosaccharides across the cell membrane. Mediates the uptake of glucose, 2-deoxyglucose, galactose, mannose, xylose and fucose, and probably also dehydroascorbate. Does not mediate fructose transport. Required for mesendoderm differentiation. The polypeptide is Solute carrier family 2, facilitated glucose transporter member 3 (Canis lupus familiaris (Dog)).